The primary structure comprises 634 residues: Chaperone protein dnaK2 (634 aa).

At Thr-197 the chain carries Phosphothreonine; by autocatalysis. Residues Gly-601–Asp-623 show a composition bias toward low complexity. The disordered stretch occupies residues Gly-601–Lys-634. Positions Asp-624 to Lys-634 are enriched in acidic residues.

This sequence belongs to the heat shock protein 70 family.

Acts as a chaperone. This chain is Chaperone protein dnaK2 (dnaK2), found in Prochlorococcus marinus (strain MIT 9313).